The sequence spans 647 residues: Sialidase (647 aa).

The N-terminal stretch at 1–37 (MTANPYLRRLPRRRAVSFLLAPALAAATVAGASPAQA) is a signal peptide. Arg68 contacts substrate. The active-site Proton acceptor is the Asp92. BNR repeat units follow at residues 102–113 (RRSTDGGRTWGE), 175–186 (ATSTDGGLTWSH), and 239–250 (VYSDDHGRTWRA). Glu260 serves as the catalytic Nucleophile. Arg276 is a substrate binding site. BNR repeat units follow at residues 287-298 (AVSTDGGHSYGP) and 348-359 (RMSCDDGQTWPV). Tyr370 functions as the Nucleophile in the catalytic mechanism. In terms of domain architecture, F5/8 type C spans 496–646 (TFTVTVGLLD…AVAELEVEGQ (151 aa)).

Belongs to the glycosyl hydrolase 33 family.

It is found in the secreted. The enzyme catalyses Hydrolysis of alpha-(2-&gt;3)-, alpha-(2-&gt;6)-, alpha-(2-&gt;8)- glycosidic linkages of terminal sialic acid residues in oligosaccharides, glycoproteins, glycolipids, colominic acid and synthetic substrates.. To release sialic acids for use as carbon and energy sources for this non-pathogenic bacterium while in pathogenic microorganisms, sialidases have been suggested to be pathogenic factors. The sequence is that of Sialidase (nedA) from Micromonospora viridifaciens.